Consider the following 957-residue polypeptide: Melanoma-associated antigen E1 (957 aa).

Residues 1-455 form a disordered region; it reads MSLVSQNSRR…DSEGPKGAEG (455 aa). 2 stretches are compositionally biased toward polar residues: residues 85–96 and 104–130; these read SEASSASGQPTI and VLPT…SVTL. A compositionally biased stretch (low complexity) spans 138 to 162; it reads TSRPPTSSEEPSTSVPPTASEVPST. Polar residues-rich tracts occupy residues 219 to 244, 268 to 320, 329 to 344, 364 to 380, and 414 to 428; these read GLST…TEGL, PSTS…STSV, STSV…STSV, LSTS…DTSV, and TLFS…NPSK. 2 consecutive MAGE domains span residues 491–690 and 745–936; these read MEQN…YNEA and LESK…YREA. Residues 743–957 are interaction with DTNA; that stretch reads SRLESKARKL…HRQIFVHNFR (215 aa).

Interacts with DTNA. Interacts with TRIM28.

The protein localises to the cytoplasm. Its subcellular location is the perinuclear region. It localises to the nucleus. It is found in the cell membrane. Functionally, may enhance ubiquitin ligase activity of RING-type zinc finger-containing E3 ubiquitin-protein ligases. Proposed to act through recruitment and/or stabilization of the Ubl-conjugating enzyme (E2) at the E3:substrate complex. The protein is Melanoma-associated antigen E1 (MAGEE1) of Homo sapiens (Human).